We begin with the raw amino-acid sequence, 394 residues long: Flap endonuclease 1 (394 aa).

The N-domain stretch occupies residues M1–K103. D34 is a binding site for Mg(2+). R69 lines the DNA pocket. Residue D85 coordinates Mg(2+). Residues R102–E123 are disordered. An I-domain region spans residues D121–H252. Mg(2+)-binding residues include E157, E159, D178, and D180. E157 contributes to the DNA binding site. Positions 230 and 232 each coordinate DNA. Position 232 (D232) interacts with Mg(2+). An interaction with PCNA region spans residues Q340–F348. The disordered stretch occupies residues K349–R394. Residues R363 to A382 show a composition bias toward basic and acidic residues. The span at K383–R394 shows a compositional bias: basic residues.

It belongs to the XPG/RAD2 endonuclease family. FEN1 subfamily. Interacts with PCNA. Three molecules of FEN1 bind to one PCNA trimer with each molecule binding to one PCNA monomer. PCNA stimulates the nuclease activity without altering cleavage specificity. Requires Mg(2+) as cofactor. Phosphorylated. Phosphorylation upon DNA damage induces relocalization to the nuclear plasma.

The protein resides in the nucleus. Its subcellular location is the nucleolus. The protein localises to the nucleoplasm. It localises to the mitochondrion. Functionally, structure-specific nuclease with 5'-flap endonuclease and 5'-3' exonuclease activities involved in DNA replication and repair. During DNA replication, cleaves the 5'-overhanging flap structure that is generated by displacement synthesis when DNA polymerase encounters the 5'-end of a downstream Okazaki fragment. It enters the flap from the 5'-end and then tracks to cleave the flap base, leaving a nick for ligation. Also involved in the long patch base excision repair (LP-BER) pathway, by cleaving within the apurinic/apyrimidinic (AP) site-terminated flap. Acts as a genome stabilization factor that prevents flaps from equilibrating into structures that lead to duplications and deletions. Also possesses 5'-3' exonuclease activity on nicked or gapped double-stranded DNA, and exhibits RNase H activity. Also involved in replication and repair of rDNA and in repairing mitochondrial DNA. This is Flap endonuclease 1 from Arthroderma otae (strain ATCC MYA-4605 / CBS 113480) (Microsporum canis).